The primary structure comprises 266 residues: uncharacterized protein (266 aa).

The first 22 residues, 1 to 22 (MGYFKRVVLYIIVMVVSVFIIG), serve as a signal peptide directing secretion. Cys-23 carries the N-palmitoyl cysteine lipid modification. Cys-23 carries the S-diacylglycerol cysteine lipid modification.

This sequence belongs to the staphylococcal tandem lipoprotein family.

Its subcellular location is the cell membrane. This is an uncharacterized protein from Staphylococcus aureus (strain N315).